A 180-amino-acid chain; its full sequence is Cell division protein SepF (180 aa).

Positions 1 to 66 (MAFSFKSFFG…NRNGFAYDNG (66 aa)) are disordered. The span at 12–23 (ADDEEEEYEDSG) shows a compositional bias: acidic residues. A compositionally biased stretch (low complexity) spans 24–57 (YEQQPNQGQQQPVNSQQQNTSNQSYSGYNNQNQN).

The protein belongs to the SepF family. Homodimer. Interacts with FtsZ.

The protein resides in the cytoplasm. In terms of biological role, cell division protein that is part of the divisome complex and is recruited early to the Z-ring. Probably stimulates Z-ring formation, perhaps through the cross-linking of FtsZ protofilaments. Its function overlaps with FtsA. The protein is Cell division protein SepF of Oenococcus oeni (strain ATCC BAA-331 / PSU-1).